The sequence spans 1818 residues: MAGPCCSPWVKLLLLAAMLSASLPGDLANRCKKAQVKSCTECIRVDKSCAYCTDELFKERRCNTQAELLAAGCRGESILVMESSLEITENTQIDTSLHRSQVSPQGLQVRLRPGEERSFVFQVFEPLESPVDLYILMDFSNSMSDDLDNLKQMGQNLAKILRQLTSDYTIGFGKFVDKVSVPQTDMRPEKLKEPWPNSDPPFSFKNVISLTENVEEFWNKLQGERISGNLDAPEGGFDAILQTAVCTRDIGWRADSTHLLVFSTESAFHYEADGANVLAGIMNRNDEKCHLDASGAYTQYKTQDYPSVPTLVRLLAKHNIIPIFAVTNYSYSYYEKLHKYFPVSSLGVLQEDSSNIVELLEEAFYRIRSNLDIRALDSPRGLRTEVTSDTLQKTETGSFHIKRGEVGTYNVHLRAVEDIDGTHVCQLAKEDQGGNIHLKPSFSDGLRMDASVICDVCPCELQKEVRSARCHFRGDFMCGHCVCNEGWSGKTCNCSTGSLSDTQPCLREGEDKPCSGHGECQCGRCVCYGEGRYEGHFCEYDNFQCPRTSGFLCNDRGRCSMGECVCEPGWTGRSCDCPLSNATCIDSNGGICNGRGYCECGRCHCNQQSLYTDTTCEINYSAIRLGLCEDLRSCVQCQAWGTGEKKGRACDDCPFKVKMVDELKKAEEVVEYCSFRDEDDDCTYSYNVEGDGSPGPNSTVLVHKKKDCPPGSFWWLIPLLIFLLLLLALLLLLCWKYCACCKACLGLLPCCNRGHMVGFKEDHYMLRENLMASDHLDTPMLRSGNLKGRDTVRWKITNNVQRPGFATHAASTSPTELVPYGLSLRLGRLCTENLMKPGTRECDQLRQEVEENLNEVYRQVSGAHKLQQTKFRQQPNTGKKQDHTIVDTVLLAPRSAKQMLLKLTEKQVEQGSFHELKVAPGYYTVTAEQDARGMVEFQEGVELVDVRVPLFIRPEDDDEKQLLVEAIDVPVGTATLGRRLVNITIIKEQASGVVSFEQPEYSVSRGDQVARIPVIRHILDNGKSQVSYSTQDNTAHGHRDYVPVEGELLFHPGETWKELQVKLLELQEVDSLLRGRQVRRFQVQLSNPKFGARLGQPSTTTVILGEHDETDRSLINQTLSSPPPPHGDLGAPQNPNAKAAGSRKIHFNWLPPPGKPMGYRVKYWIQGDSESEAHLLDSKVPSVELTNLYPYCDYEMKVCAYGAQGEGPYSSLVSCRTHQEVPSEPGRLAFNVVSSTVTQLSWAEPAETNGEITAYEVCYGLVNEDNRPIGPMKKVLVDNPKNRMLLIENLRESQPYRYTVKARNGAGWGPEREAIINLATQPKRPMSIPIIPDIPIVDAQGGEDYENFLMYSDDVLRSPASSQRPSVSDDTGCGWKFEPLLGEELDLRRVTWRLPPELIPRLSASSGRSDEDGSVAGGVEGEGSGWIRGATPRPPGEHLVNGRMDFAYPGSANSLHRMTAANVAYGTHLSPHLSHRVLSTSSTLTRDYHSLTRTEHSHSGTLPRDYSTLTSLSSQDSRGAVGVPDTPTRLVFSALGPTSLKVSWQEPQCDRMLLGYSVEYQLLNGGEMHRLNIPNPGQTSVVVEDLLPNHSYVFRVRAQSQEGWGREREGVITIESQVHPQSPLCPLPGSAFTLSTPSAPGPLVFTALSPDSLQLSWERPRRPNGDILGYLVTCEMAQGGAPARTFRVDGDNPESRLTVPGLSENVPYKFKVQARTTEGFGPEREGIITIESQVGGPFPQLGSHSGLFQNPVQSEFSSVTSTHSTTTEPFLMDGLTLGTQRLEAGGSLTRHVTQEFVTRTLTASGSLSTHMDQQFFQT.

An N-terminal signal peptide occupies residues 1–28 (MAGPCCSPWVKLLLLAAMLSASLPGDLA). Residues 29 to 712 (NRCKKAQVKS…HKKKDCPPGS (684 aa)) are Extracellular-facing. Residues 30 to 74 (RCKKAQVKSCTECIRVDKSCAYCTDELFKERRCNTQAELLAAGCR) form the PSI domain. Intrachain disulfides connect cysteine 31-cysteine 49, cysteine 39-cysteine 457, cysteine 42-cysteine 62, cysteine 52-cysteine 73, cysteine 246-cysteine 289, cysteine 459-cysteine 478, cysteine 470-cysteine 481, and cysteine 483-cysteine 492. Positions 132–310 (DLYILMDFSN…KTQDYPSVPT (179 aa)) constitute a VWFA domain. Serine 140 and serine 142 together coordinate Mg(2+). Positions 142, 145, 146, and 177 each coordinate Ca(2+). The interval 195–200 (WPNSDP) is involved in NRG1- and IGF1-binding. Ca(2+)-binding residues include asparagine 229, aspartate 231, proline 233, and glutamate 234. Mg(2+) is bound at residue glutamate 234. N-linked (GlcNAc...) asparagine glycosylation is present at asparagine 328. Glutamate 351 serves as a coordination point for Ca(2+). 4 I-EGF domains span residues 459–493 (CELQ…KTCN), 494–539 (CSTG…HFCE), 540–576 (YDNF…RSCD), and 577–617 (CPLS…TTCE). The short motif at 473-475 (RGD) is the Cell attachment site element. N-linked (GlcNAc...) asparagine glycosylation occurs at asparagine 493. 11 cysteine pairs are disulfide-bonded: cysteine 494–cysteine 522, cysteine 505–cysteine 520, cysteine 514–cysteine 525, cysteine 527–cysteine 538, cysteine 545–cysteine 559, cysteine 553–cysteine 564, cysteine 566–cysteine 575, cysteine 577–cysteine 600, cysteine 584–cysteine 598, cysteine 592–cysteine 603, and cysteine 605–cysteine 616. Asparagine 581 carries an N-linked (GlcNAc...) asparagine glycan. Asparagine 619 carries N-linked (GlcNAc...) asparagine glycosylation. 4 cysteine pairs are disulfide-bonded: cysteine 628–cysteine 673, cysteine 634–cysteine 653, cysteine 637–cysteine 650, and cysteine 682–cysteine 708. An N-linked (GlcNAc...) asparagine glycan is attached at asparagine 697. A helical transmembrane segment spans residues 713–733 (FWWLIPLLIFLLLLLALLLLL). The palmitoylated on several cysteines stretch occupies residues 734–751 (CWKYCACCKACLGLLPCC). The Cytoplasmic portion of the chain corresponds to 734-1818 (CWKYCACCKA…THMDQQFFQT (1085 aa)). The residue at position 773 (serine 773) is a Phosphoserine. The Calx-beta domain maps to 981 to 1086 (VNITIIKEQA…QVRRFQVQLS (106 aa)). The Cell attachment site signature appears at 1005–1007 (RGD). Phosphoserine occurs at positions 1071 and 1121. The segment at 1115–1137 (INQTLSSPPPPHGDLGAPQNPNA) is disordered. Fibronectin type-III domains are found at residues 1131–1220 (APQN…THQE) and 1224–1323 (EPGR…TQPK). Positions 1402 to 1433 (LSASSGRSDEDGSVAGGVEGEGSGWIRGATPR) are disordered. A compositionally biased stretch (gly residues) spans 1415–1426 (VAGGVEGEGSGW). Phosphoserine is present on residues serine 1451, serine 1454, and serine 1470. Threonine 1483 is modified (phosphothreonine). A Phosphoserine modification is found at serine 1490. Threonine 1526 is modified (phosphothreonine). Fibronectin type-III domains are found at residues 1526 to 1621 (TPTR…VHPQ) and 1639 to 1735 (APGP…SQVG). Residue serine 1787 is modified to Phosphoserine.

The protein belongs to the integrin beta chain family. In terms of assembly, heterodimer of an alpha and a beta subunit. Beta-4 associates with alpha-6. Interacts (via cytoplasmic region) with COL17A1 (via cytoplasmic region). Interacts (via cytoplasmic region) with DST isoform 3 (via N-terminus). Interacts (via cytoplasmic domain) with DST (via N-terminus). Interacts with RAC1. ITGA6:ITGB4 is found in a ternary complex with NRG1 and ERBB3. ITGA6:ITGB4 is found in a ternary complex with IGF1 and IGF1R. ITGA6:ITGB4 interacts with IGF2. Interacts with TMEM268; this interaction prevents ITGB4 degradation. In terms of processing, palmitoylated by DHHC3 at several cysteines of the membrane-proximal region, enhancing stability and cell surface expression. Palmitoylation also promotes secondary association with tertaspanins.

The protein localises to the cell membrane. It localises to the cell junction. It is found in the hemidesmosome. In terms of biological role, integrin alpha-6/beta-4 is a receptor for laminin. It plays a critical structural role in the hemidesmosome of epithelial cells. Is required for the regulation of keratinocyte polarity and motility. ITGA6:ITGB4 binds to NRG1 (via EGF domain) and this binding is essential for NRG1-ERBB signaling. ITGA6:ITGB4 binds to IGF1 and this binding is essential for IGF1 signaling. ITGA6:ITGB4 binds to IGF2 and this binding is essential for IGF2 signaling. This is Integrin beta-4 (Itgb4) from Mus musculus (Mouse).